A 639-amino-acid chain; its full sequence is Protein argonaute (639 aa).

Residues 1–100 are N-terminal domain; sequence MYLNLYKIDI…YIKKLFLDND (100 aa). The tract at residues 101–153 is linker L1; that stretch reads FYFKKGNNFISNSEVFSLDSNENVNAHLTYKIKIHNISNEYYLSILPKFTFLS. The interval 154-209 is PAZ domain; that stretch reads KEPALESAIKSGYLYNIKSGKSFPYISGLDGILKIDIGNNQIVEVAYPENYLFNFT. A linker L2 region spans residues 210–292; the sequence is TRDAEKYGFS…KYSFYKNEQP (83 aa). The segment at 293-424 is mid domain; sequence LKAIFFFSSK…YVYKMGNFIP (132 aa). The PIWI domain stretch occupies residues 425–639; the sequence is ECKPFILKKM…DYEWKLYIPY (215 aa). Catalysis depends on residues Asp446, Glu482, Asp516, and Asn624. Asp446 contributes to the Mn(2+) binding site. Mn(2+)-binding residues include Asp516 and Asn624.

It belongs to the argonaute family. Long pAgo subfamily. The cofactor is Mn(2+).

It is found in the cytoplasm. An RNA-guided ssDNA endonuclease that may play a role in defense against invading mobile genetic elements. Uses short 5'-OH-ssRNA sequences as guides (gRNA) to bind complementary target DNA (tDNA) or target RNA resulting in target cleavage. The cleavage site is 10 nucleotides (nt) downstream of the target residue base-paired with the 5'-end of the gRNA. Reaction rates are fastest on 5'-OH-gRNA:tDNA followed by 5'-OH-gRNA:target RNA. gRNA between 17-21 nt supports equivalent rates of cleavage, has no preferred 5'-nt. Has weak activity on tDNA with 5'-phospho-gRNA, yielding products 1-2 nt longer. Unlike other characterized prokaryotic Ago proteins symmetric mismatches centered around the cleavage site reduce cleavage efficiency. This Marinitoga piezophila (strain DSM 14283 / JCM 11233 / KA3) protein is Protein argonaute.